Consider the following 379-residue polypeptide: Lipoyl synthase 1, mitochondrial (379 aa).

Residues cysteine 106, cysteine 111, cysteine 117, cysteine 137, cysteine 141, cysteine 144, and serine 352 each contribute to the [4Fe-4S] cluster site. Residues 122-341 enclose the Radical SAM core domain; the sequence is EHGTQTATIM…EERGNELGFL (220 aa).

This sequence belongs to the radical SAM superfamily. Lipoyl synthase family. Requires [4Fe-4S] cluster as cofactor.

Its subcellular location is the mitochondrion. The catalysed reaction is [[Fe-S] cluster scaffold protein carrying a second [4Fe-4S](2+) cluster] + N(6)-octanoyl-L-lysyl-[protein] + 2 oxidized [2Fe-2S]-[ferredoxin] + 2 S-adenosyl-L-methionine + 4 H(+) = [[Fe-S] cluster scaffold protein] + N(6)-[(R)-dihydrolipoyl]-L-lysyl-[protein] + 4 Fe(3+) + 2 hydrogen sulfide + 2 5'-deoxyadenosine + 2 L-methionine + 2 reduced [2Fe-2S]-[ferredoxin]. Its pathway is protein modification; protein lipoylation via endogenous pathway; protein N(6)-(lipoyl)lysine from octanoyl-[acyl-carrier-protein]: step 2/2. Functionally, catalyzes the radical-mediated insertion of two sulfur atoms into the C-6 and C-8 positions of the octanoyl moiety bound to the lipoyl domains of lipoate-dependent enzymes, thereby converting the octanoylated domains into lipoylated derivatives. The protein is Lipoyl synthase 1, mitochondrial of Drosophila yakuba (Fruit fly).